The primary structure comprises 153 residues: Aspartate carbamoyltransferase regulatory chain (153 aa).

Residues C109, C114, C138, and C141 each coordinate Zn(2+).

The protein belongs to the PyrI family. Contains catalytic and regulatory chains. It depends on Zn(2+) as a cofactor.

Its function is as follows. Involved in allosteric regulation of aspartate carbamoyltransferase. This Shigella flexneri serotype 5b (strain 8401) protein is Aspartate carbamoyltransferase regulatory chain.